We begin with the raw amino-acid sequence, 217 residues long: Membrane-associated progesterone receptor component 2 (217 aa).

O-linked (Xyl...) (chondroitin sulfate) serine glycosylation is present at serine 15. Residues 40–62 form a helical membrane-spanning segment; the sequence is ALLATGGEMLLNVALVALVLLGA. Phosphoserine is present on residues serine 84, serine 98, and serine 202. A Cytochrome b5 heme-binding domain is found at 96 to 195; that stretch reads DFSLEQLRQY…EKYDYVGRLL (100 aa). Residues 196–217 form a disordered region; it reads KPGEEPSEYTDEEDTKDHSKQD. Over residues 200 to 209 the composition is skewed to acidic residues; sequence EPSEYTDEED. Tyrosine 204 bears the Phosphotyrosine mark. Threonine 205 is modified (phosphothreonine).

The protein belongs to the cytochrome b5 family. MAPR subfamily. Interacts with PGRMC1. Interacts with AAAS. Expressed in brown adipose tissue, white adipose tissue, liver, heart, skeletal muscle, brain and adrenal gland.

It localises to the membrane. Its subcellular location is the nucleus envelope. It is found in the endoplasmic reticulum. The protein resides in the secreted. In terms of biological role, required for the maintenance of uterine histoarchitecture and normal female reproductive lifespan. May serve as a universal non-classical progesterone receptor in the uterus. Intracellular heme chaperone required for delivery of labile, or signaling heme, to the nucleus. Plays a role in adipocyte function and systemic glucose homeostasis. In brown fat, which has a high demand for heme, delivery of labile heme in the nucleus regulates the activity of heme-responsive transcriptional repressors such as NR1D1 and BACH1. The polypeptide is Membrane-associated progesterone receptor component 2 (Mus musculus (Mouse)).